Here is a 161-residue protein sequence, read N- to C-terminus: Negative cofactor 2 complex subunit beta (161 aa).

Residues 11–75 form the Histone-fold domain; it reads SLPKATVQKM…IAAEHIIKAL (65 aa). A compositionally biased stretch (basic and acidic residues) spans 93–107; that stretch reads EHKEQQKNREKKSSK. 2 disordered regions span residues 93–116 and 130–161; these read EHKE…VSRD and RERF…TKEN. The span at 135 to 147 shows a compositional bias: polar residues; it reads NQNIAHDNHTTTA.

The protein belongs to the NC2 beta/DR1 family.

The protein resides in the cytoplasm. The protein localises to the nucleus. This is Negative cofactor 2 complex subunit beta (ncb2) from Schizosaccharomyces pombe (strain 972 / ATCC 24843) (Fission yeast).